The sequence spans 179 residues: Large ribosomal subunit protein uL5 (179 aa).

This sequence belongs to the universal ribosomal protein uL5 family. Part of the 50S ribosomal subunit; part of the 5S rRNA/L5/L18/L25 subcomplex. Contacts the 5S rRNA and the P site tRNA. Forms a bridge to the 30S subunit in the 70S ribosome.

In terms of biological role, this is one of the proteins that bind and probably mediate the attachment of the 5S RNA into the large ribosomal subunit, where it forms part of the central protuberance. In the 70S ribosome it contacts protein S13 of the 30S subunit (bridge B1b), connecting the 2 subunits; this bridge is implicated in subunit movement. Contacts the P site tRNA; the 5S rRNA and some of its associated proteins might help stabilize positioning of ribosome-bound tRNAs. The protein is Large ribosomal subunit protein uL5 of Clostridium perfringens (strain ATCC 13124 / DSM 756 / JCM 1290 / NCIMB 6125 / NCTC 8237 / Type A).